The following is a 166-amino-acid chain: Cofilin-1 (166 aa).

Ala2 carries the post-translational modification N-acetylalanine. 2 positions are modified to phosphoserine: Ser3 and Ser8. In terms of domain architecture, ADF-H spans 4 to 153; the sequence is GVAVSDGVIK…KDRCTLAEKL (150 aa). Lys13 carries the post-translational modification N6-acetyllysine. Thr25 bears the Phosphothreonine mark. A Nuclear localization signal motif is present at residues 30–34; that stretch reads KKRKK. Ser41 is modified (phosphoserine). Thr63 is modified (phosphothreonine). Residue Tyr68 is modified to Phosphotyrosine. Lys73 carries the N6-acetyllysine modification. Residue Tyr82 is modified to Phosphotyrosine. Lys132 participates in a covalent cross-link: Glycyl lysine isopeptide (Lys-Gly) (interchain with G-Cter in SUMO2). Tyr140 bears the Phosphotyrosine mark. Residue Lys144 is modified to N6-acetyllysine. Residue Ser156 is modified to Phosphoserine.

Belongs to the actin-binding proteins ADF family. As to quaternary structure, can bind G- and F-actin in a 1:1 ratio of cofilin to actin. It is a major component of intranuclear and cytoplasmic actin rods. Interacts with the subcortical maternal complex (SCMC) via interaction with TLE6 and NLRP5. Interacts with C9orf72. Inactivated by phosphorylation on Ser-3. Phosphorylated on Ser-3 in resting cells. Dephosphorylated by PDXP/chronophin; this restores its activity in promoting actin filament depolymerization. The phosphorylation of Ser-24 may prevent recognition of the nuclear localization signal. Phosphorylated via a ARRB1-RAC1-LIMK1-PAK1 cascade upon active ligand stimulation of atypical chemokine receptor ACKR2. Widely distributed in various tissues. Not found in skeletal muscle.

It localises to the nucleus matrix. The protein localises to the cytoplasm. It is found in the cytoskeleton. Its subcellular location is the cell projection. The protein resides in the ruffle membrane. It localises to the lamellipodium membrane. The protein localises to the lamellipodium. It is found in the growth cone. Its subcellular location is the axon. Binds to F-actin and exhibits pH-sensitive F-actin depolymerizing activity. In conjunction with the subcortical maternal complex (SCMC), plays an essential role for zygotes to progress beyond the first embryonic cell divisions via regulation of actin dynamics. Required for the centralization of the mitotic spindle and symmetric division of zygotes. Plays a role in the regulation of cell morphology and cytoskeletal organization in epithelial cells. Required for the up-regulation of atypical chemokine receptor ACKR2 from endosomal compartment to cell membrane, increasing its efficiency in chemokine uptake and degradation. Required for neural tube morphogenesis and neural crest cell migration. The chain is Cofilin-1 (Cfl1) from Mus musculus (Mouse).